A 366-amino-acid chain; its full sequence is Peptide chain release factor 2 (366 aa).

Glutamine 251 is modified (N5-methylglutamine).

It belongs to the prokaryotic/mitochondrial release factor family. Methylated by PrmC. Methylation increases the termination efficiency of RF2.

Its subcellular location is the cytoplasm. Peptide chain release factor 2 directs the termination of translation in response to the peptide chain termination codons UGA and UAA. This Campylobacter concisus (strain 13826) protein is Peptide chain release factor 2.